The sequence spans 201 residues: Small ribosomal subunit protein uS4c (201 aa).

The S4 RNA-binding domain occupies 89–149 (MRLDNILFRL…DKPKSGALIK (61 aa)).

It belongs to the universal ribosomal protein uS4 family. In terms of assembly, part of the 30S ribosomal subunit. Contacts protein S5. The interaction surface between S4 and S5 is involved in control of translational fidelity.

The protein localises to the plastid. Its function is as follows. One of the primary rRNA binding proteins, it binds directly to 16S rRNA where it nucleates assembly of the body of the 30S subunit. With S5 and S12 plays an important role in translational accuracy. This Cuscuta exaltata (Tall dodder) protein is Small ribosomal subunit protein uS4c (rps4).